A 238-amino-acid chain; its full sequence is uncharacterized protein (238 aa).

In terms of domain architecture, Response regulatory spans 3 to 116; the sequence is RVIIVDDEQP…RLAKTLTRLS (114 aa). The residue at position 54 (aspartate 54) is a 4-aspartylphosphate. The HTH LytTR-type domain occupies 136–237; sequence IPCSGHNRIF…LKSLKEKLGI (102 aa).

This is an uncharacterized protein from Yersinia pestis.